The primary structure comprises 156 residues: Putative increased recombination centers protein 11 (156 aa).

A helical transmembrane segment spans residues Ala20–His42.

It is found in the membrane. In Saccharomyces cerevisiae (strain ATCC 204508 / S288c) (Baker's yeast), this protein is Putative increased recombination centers protein 11 (IRC11).